Consider the following 315-residue polypeptide: MTHIYKKLGAAFFALLLIAALAACGNNSESKGSASDSKGAETFTYKAENGNVKIPKHPKRVVVMADGYYGYFKTLGINVVGAPENVFKNPYYKGKTNGVENIGDGTSVEKVIDLNPDLIIVWTTQGADIKKLEKIAPTVAVKYDKLDNIEQLKEFAKMTGTEDKAEKWLAKWDKKVAAAKTKIKKAVGDKTISIMQTNGKDIYVFGKDFGRGGSIIYKDLGLQATKLTKEKAIDQGPGYTSISLEKLPDFAGDYIFAGPWQSGGDDGGVFESSIWKNLNAVKNGHVYKMDPIGFYFTDPISLEGQLEFITESLTK.

The signal sequence occupies residues 1 to 23 (MTHIYKKLGAAFFALLLIAALAA). Cys24 carries N-palmitoyl cysteine lipidation. A lipid anchor (S-diacylglycerol cysteine) is attached at Cys24. Residues 60-315 (RVVVMADGYY…LEFITESLTK (256 aa)) form the Fe/B12 periplasmic-binding domain.

Belongs to the bacterial solute-binding protein 8 family. In terms of assembly, the complex is composed of an ATP-binding protein (FhuC), two transmembrane proteins (FhuB and FhuG) and a solute-binding protein (FhuD or YxeB).

It localises to the cell membrane. The protein localises to the membrane raft. Part of the ABC transporter complex FhuCBGD involved in iron(3+)-hydroxamate import. Binds the iron(3+)-hydroxamate complex and transfers it to the membrane-bound permease. Required for the transport of ferrichrome and coprogen. The chain is Iron(3+)-hydroxamate-binding protein FhuD (fhuD) from Bacillus subtilis (strain 168).